The primary structure comprises 773 residues: 4'-phosphopantetheine phosphatase (773 aa).

Alanine 2 bears the N-acetylalanine mark. Residues 2 to 402 (AECRASGGGS…APELCPTQRA (401 aa)) form a pantothenate kinase region. Residues serine 196 and serine 199 each coordinate acetyl-CoA. Residue tyrosine 320 is modified to 3'-nitrotyrosine. The tract at residues 403 to 773 (RSGTFDLLEM…VIFKYEVPAE (371 aa)) is 4'-phosphopantetheine phosphatase. At serine 404 the chain carries Phosphoserine. Threonine 406 bears the Phosphothreonine mark. 3 residues coordinate Mn(2+): aspartate 623, asparagine 624, and aspartate 659. Residues 724 to 728 (EGMGR) carry the Subfamily II EGMGR motif motif.

It in the N-terminal section; belongs to the type II pantothenate kinase family. This sequence in the C-terminal section; belongs to the damage-control phosphatase family. Phosphopantetheine phosphatase (II) subfamily. In terms of assembly, homodimer. Interacts with PKM. The cofactor is Mn(2+). Requires Ni(2+) as cofactor.

Its subcellular location is the cytoplasm. The enzyme catalyses (R)-4'-phosphopantetheine + H2O = (R)-pantetheine + phosphate. It carries out the reaction (R)-4'-phosphopantetheine sulfonate + H2O = (R)-pantetheine sulfonate + phosphate. It catalyses the reaction (R)-4'-phospho-S-sulfopantetheine + H2O = (R)-S-sulfopantetheine + phosphate. With respect to regulation, activity is strongly promoted by Co(2+), Ni(2+), Mg(2+) and Mn(2+). Activity is inhibited by EDTA. Functionally, phosphatase which shows a preference for 4'-phosphopantetheine and its oxidatively damaged forms (sulfonate or S-sulfonate), providing strong indirect evidence that the phosphatase activity pre-empts damage in the coenzyme A (CoA) pathway. Hydrolyzing excess 4'-phosphopantetheine could constitute a directed overflow mechanism to prevent its oxidation to the S-sulfonate, sulfonate, or other forms. Hydrolyzing 4'-phosphopantetheine sulfonate or S-sulfonate would forestall their conversion to inactive forms of CoA and acyl carrier protein. May play a role in the physiological regulation of CoA intracellular levels. The protein is 4'-phosphopantetheine phosphatase of Rattus norvegicus (Rat).